Here is a 384-residue protein sequence, read N- to C-terminus: MAP kinase-activated protein kinase 3 (384 aa).

M1 bears the N-acetylmethionine mark. A disordered region spans residues 1–22; it reads MDVETAEEQGGPAPPSGVPCGP. Residues 46-306 form the Protein kinase domain; that stretch reads QLSKQVLGLG…ITQFMNHPWI (261 aa). Residues 52–60 and K75 contribute to the ATP site; that span reads LGLGVNGKV. Catalysis depends on D168, which acts as the Proton acceptor. T203 is subject to Phosphothreonine; by MAPK14. Position 253 is a phosphoserine; by MAPK14 (S253). A Phosphoserine; by autocatalysis modification is found at S309. Residues 309-345 form an autoinhibitory helix region; the sequence is SMVVPQTPLHTARVLQEDRDHWDEVKEEMTSALATMR. Phosphothreonine; by MAPK14 is present on T315. The Nuclear export signal (NES) motif lies at 337–346; that stretch reads MTSALATMRV. Positions 347–371 are p38 MAPK-binding site; that stretch reads DYDQVKIKDLKTSNNRLLNKRRKKQ. 2 consecutive short sequence motifs (bipartite nuclear localization signal) follow at residues 352–355 and 366–370; these read KIKD and KRRKK. Residues 359 to 384 form a disordered region; it reads SNNRLLNKRRKKQAGSSSGSQGCNNQ. A compositionally biased stretch (low complexity) spans 373–384; the sequence is GSSSGSQGCNNQ.

It belongs to the protein kinase superfamily. CAMK Ser/Thr protein kinase family. Heterodimer with p38-alpha/MAPK14. The heterodimer with p38-alpha/MAPK14 forms a stable complex: molecules are positioned 'face to face' so that the ATP-binding sites of both kinases are at the heterodimer interface. Interacts with TCF3 and with polycomb proteins, such as PCH2 and BMI1/PCGF4. Phosphorylated and activated by MAPK1/ERK2 and MAPK3/ERK1. Phosphorylated and activated by MAP kinase p38-alpha/MAPK14 at Thr-203, Ser-253 and Thr-315.

Its subcellular location is the nucleus. It localises to the cytoplasm. It carries out the reaction L-seryl-[protein] + ATP = O-phospho-L-seryl-[protein] + ADP + H(+). The enzyme catalyses L-threonyl-[protein] + ATP = O-phospho-L-threonyl-[protein] + ADP + H(+). With respect to regulation, activated following phosphorylation by p38-alpha/MAPK14 following various stresses. Inhibited by ligand 5B (2'-[2-(1,3-benzodioxol-5-yl)pyrimidin-4-yl]-5',6'-dihydrospiro[piperidine-4,7'-pyrrolo[3,2-c]pyridin]- 4'(1'h)-one) and ligand P4O (2-[2-(2-fluorophenyl)pyridin-4-yl]-1,5,6,7-tetrahydro- 4h-pyrrolo[3,2-c]pyridin-4-one), 2 ATP-competitive inhibitors. Its function is as follows. Stress-activated serine/threonine-protein kinase involved in cytokines production, endocytosis, cell migration, chromatin remodeling and transcriptional regulation. Following stress, it is phosphorylated and activated by MAP kinase p38-alpha/MAPK14, leading to phosphorylation of substrates. Phosphorylates serine in the peptide sequence, Hyd-X-R-X(2)-S, where Hyd is a large hydrophobic residue. MAPKAPK2 and MAPKAPK3, share the same function and substrate specificity, but MAPKAPK3 kinase activity and level in protein expression are lower compared to MAPKAPK2. Phosphorylates HSP27/HSPB1, KRT18, KRT20, RCSD1, RPS6KA3, TAB3 and TTP/ZFP36. Mediates phosphorylation of HSP27/HSPB1 in response to stress, leading to dissociate HSP27/HSPB1 from large small heat-shock protein (sHsps) oligomers and impair their chaperone activities and ability to protect against oxidative stress effectively. Involved in inflammatory response by regulating tumor necrosis factor (TNF) and IL6 production post-transcriptionally: acts by phosphorylating AU-rich elements (AREs)-binding proteins, such as TTP/ZFP36, leading to regulate the stability and translation of TNF and IL6 mRNAs. Phosphorylation of TTP/ZFP36, a major post-transcriptional regulator of TNF, promotes its binding to 14-3-3 proteins and reduces its ARE mRNA affinity leading to inhibition of dependent degradation of ARE-containing transcript. Involved in toll-like receptor signaling pathway (TLR) in dendritic cells: required for acute TLR-induced macropinocytosis by phosphorylating and activating RPS6KA3. Also acts as a modulator of Polycomb-mediated repression. The protein is MAP kinase-activated protein kinase 3 (MAPKAPK3) of Bos taurus (Bovine).